The sequence spans 238 residues: Probable transcriptional regulatory protein SMU_1789c (238 aa).

The protein belongs to the TACO1 family. YeeN subfamily.

The protein resides in the cytoplasm. The sequence is that of Probable transcriptional regulatory protein SMU_1789c from Streptococcus mutans serotype c (strain ATCC 700610 / UA159).